A 312-amino-acid polypeptide reads, in one-letter code: tRNA dimethylallyltransferase (312 aa).

13–20 (GPTAAGKT) provides a ligand contact to ATP. Position 15–20 (15–20 (TAAGKT)) interacts with substrate. 3 interaction with substrate tRNA regions span residues 38–41 (DSAM), 162–166 (QRLLR), and 244–249 (RCVGYR).

Belongs to the IPP transferase family. As to quaternary structure, monomer. It depends on Mg(2+) as a cofactor.

The catalysed reaction is adenosine(37) in tRNA + dimethylallyl diphosphate = N(6)-dimethylallyladenosine(37) in tRNA + diphosphate. In terms of biological role, catalyzes the transfer of a dimethylallyl group onto the adenine at position 37 in tRNAs that read codons beginning with uridine, leading to the formation of N6-(dimethylallyl)adenosine (i(6)A). This is tRNA dimethylallyltransferase from Chromohalobacter salexigens (strain ATCC BAA-138 / DSM 3043 / CIP 106854 / NCIMB 13768 / 1H11).